The following is a 166-amino-acid chain: Phosphopantetheine adenylyltransferase (166 aa).

Position 8 (Ser-8) interacts with substrate. Residues 8 to 9 (SF) and His-16 contribute to the ATP site. Residues Lys-40, Thr-72, and Arg-86 each contribute to the substrate site. Residues 87-89 (GLR), Glu-97, and 122-128 (YSFLSSS) contribute to the ATP site.

This sequence belongs to the bacterial CoaD family. As to quaternary structure, homohexamer. Requires Mg(2+) as cofactor.

It localises to the cytoplasm. It catalyses the reaction (R)-4'-phosphopantetheine + ATP + H(+) = 3'-dephospho-CoA + diphosphate. Its pathway is cofactor biosynthesis; coenzyme A biosynthesis; CoA from (R)-pantothenate: step 4/5. Functionally, reversibly transfers an adenylyl group from ATP to 4'-phosphopantetheine, yielding dephospho-CoA (dPCoA) and pyrophosphate. The polypeptide is Phosphopantetheine adenylyltransferase (Synechococcus elongatus (strain ATCC 33912 / PCC 7942 / FACHB-805) (Anacystis nidulans R2)).